Consider the following 98-residue polypeptide: HssA/B-like protein 34 (98 aa).

2 disordered regions span residues 1–26 and 60–98; these read MTLF…SFGS and AKSS…SCSC. A compositionally biased stretch (gly residues) spans 60–72; the sequence is AKSSGGSCGGKGG. A compositionally biased stretch (basic residues) spans 73-88; that stretch reads SHNHGHGHGHGPHGHG. Residues 89–98 are compositionally biased toward gly residues; the sequence is GKGSGGSCSC.

Belongs to the hssA/B family.

This is HssA/B-like protein 34 (hssl34) from Dictyostelium discoideum (Social amoeba).